We begin with the raw amino-acid sequence, 339 residues long: MKEKLKELQELALSKIEAVKTSSELEEIRVKFLGKKGELTTILRGMGNLSPEERPIVGKLVNEAKAAVEEKLESVLKAIKDKEKAEKLAGETIDISLPGRKKVIGKRHPLDLTLQSMEEIFVSMGFTIEDGPEVEYDHYNFEALNIPKDHPARSEQDTLYINDNIVLRTQTSPIQVRTMENQKPPIKMISPGKVYRSDSVDATHSPIFYQMEGLVIDKGVTFADLKGTLELFAKKMFGDKVQTKFRPHHFPFTEPSAEMDATCFVCGGEGCRVCKGSGWIELLGCGMVHPNVLRNCGLDPEVYSGFAFGFGVDRMVMLKYGIDDIRLLYESDMRFLNQF.

Glu254 is a binding site for Mg(2+).

The protein belongs to the class-II aminoacyl-tRNA synthetase family. Phe-tRNA synthetase alpha subunit type 1 subfamily. Tetramer of two alpha and two beta subunits. Mg(2+) serves as cofactor.

The protein resides in the cytoplasm. It carries out the reaction tRNA(Phe) + L-phenylalanine + ATP = L-phenylalanyl-tRNA(Phe) + AMP + diphosphate + H(+). The chain is Phenylalanine--tRNA ligase alpha subunit from Clostridium beijerinckii (strain ATCC 51743 / NCIMB 8052) (Clostridium acetobutylicum).